We begin with the raw amino-acid sequence, 403 residues long: Argininosuccinate synthase (403 aa).

An ATP-binding site is contributed by Ala-10–Ser-18. Tyr-87 is an L-citrulline binding site. Position 117 (Gly-117) interacts with ATP. Thr-119, Asn-123, and Asp-124 together coordinate L-aspartate. Residue Asn-123 coordinates L-citrulline. Positions 127, 175, 184, 260, and 272 each coordinate L-citrulline.

Belongs to the argininosuccinate synthase family. Type 1 subfamily. In terms of assembly, homotetramer.

Its subcellular location is the cytoplasm. It carries out the reaction L-citrulline + L-aspartate + ATP = 2-(N(omega)-L-arginino)succinate + AMP + diphosphate + H(+). Its pathway is amino-acid biosynthesis; L-arginine biosynthesis; L-arginine from L-ornithine and carbamoyl phosphate: step 2/3. This chain is Argininosuccinate synthase, found in Bacillus pumilus (strain SAFR-032).